We begin with the raw amino-acid sequence, 391 residues long: MAKAKFERTKPHVNIGTIGHVDHGKTTLTAAITKYFGEFKAYDQIDGAPEERARGITISTAHVEYESENRHYAHVDCPGHADYVKNMITGAAQMDGAILVVNAADGPMPQTREHILLGRQVGIPYMVVYLNKVDQVDDPELLELVEMEVRELLSSYDYPGDDIPIVKGSALAALEGRDAEIGENSIRELMKAVDDYIPTPERAVDLPFLMPIEDVFSISGRGTVVTGRVERGAVNVGDELEIVGIRPTKKTTCTGVEMFRKLLDRGEAGDNIGALLRGVERDGVERGQVLAKPGSVTPHTEFEAEAYILTKEEGGRHTPFFANYRPQFYFRTTDVTGTVKLPEGTEMVMPGDNLKFEVELIAPIAMEEKLRFAIREGGRTVGAGVVSKILK.

In terms of domain architecture, tr-type G spans 10-201 (KPHVNIGTIG…AVDDYIPTPE (192 aa)). A G1 region spans residues 19–26 (GHVDHGKT). 19-26 (GHVDHGKT) contacts GTP. Thr26 contributes to the Mg(2+) binding site. The interval 55–59 (GITIS) is G2. Residues 76-79 (DCPG) form a G3 region. Residues 76–80 (DCPGH) and 131–134 (NKVD) each bind GTP. Residues 131 to 134 (NKVD) are G4. Residues 169–171 (SAL) form a G5 region.

The protein belongs to the TRAFAC class translation factor GTPase superfamily. Classic translation factor GTPase family. EF-Tu/EF-1A subfamily. As to quaternary structure, monomer.

It localises to the cytoplasm. It carries out the reaction GTP + H2O = GDP + phosphate + H(+). GTP hydrolase that promotes the GTP-dependent binding of aminoacyl-tRNA to the A-site of ribosomes during protein biosynthesis. This is Elongation factor Tu from Paracoccus denitrificans (strain Pd 1222).